The primary structure comprises 153 residues: Small heat shock protein ibp (153 aa).

The sHSP domain occupies Lys-35 to Lys-153.

This sequence belongs to the small heat shock protein (HSP20) family.

The sequence is that of Small heat shock protein ibp (ibp) from Buchnera aphidicola subsp. Thelaxes suberi.